The following is a 292-amino-acid chain: uncharacterized protein (292 aa).

Positions 1–213 (MTTAITPDKK…DQDDDDQKDL (213 aa)) are disordered. Basic residues-rich tracts occupy residues 27 to 43 (TKPR…KSKK) and 50 to 78 (AKKR…KKAP). A compositionally biased stretch (polar residues) spans 90 to 100 (QQAQASLQKPI). A compositionally biased stretch (pro residues) spans 116 to 134 (PRPPTPIPPTGVKPEPAPR). Positions 143 to 158 (SVSSTTPRTSATTGTT) are enriched in low complexity.

This is an uncharacterized protein from Caenorhabditis elegans.